Consider the following 588-residue polypeptide: Sperm-associated microtubule inner protein 4 (588 aa).

Thr219 is modified (phosphothreonine). A phosphoserine mark is found at Ser224, Ser406, Ser421, Ser427, and Ser437. The residue at position 441 (Tyr441) is a Phosphotyrosine. Residues Ser457 and Ser484 each carry the phosphoserine modification. Thr512 bears the Phosphothreonine mark. Ser516 carries the phosphoserine modification. Residue Lys543 forms a Glycyl lysine isopeptide (Lys-Gly) (interchain with G-Cter in SUMO2) linkage. At Ser545 the chain carries Phosphoserine.

The protein resides in the cytoplasm. It localises to the cytoskeleton. The protein localises to the microtubule organizing center. It is found in the centrosome. Its subcellular location is the flagellum axoneme. Functionally, microtubule inner protein (MIP) part of the dynein-decorated doublet microtubules (DMTs) in flagellum axoneme. May serve to reinforce and thus stabilize the microtubule structure in the sperm flagella. The sequence is that of Sperm-associated microtubule inner protein 4 (Spmip4) from Rattus norvegicus (Rat).